We begin with the raw amino-acid sequence, 513 residues long: Abl interactor 2 (513 aa).

Ser40 is subject to Phosphoserine. One can recognise a t-SNARE coiled-coil homology domain in the interval 45 to 107 (RALEETKAYT…DIHKEKVARR (63 aa)). The segment at 167-431 (KMGGLPRTTP…PPEDYEEEEA (265 aa)) is disordered. Pro residues predominate over residues 174-185 (TTPPTQKPPSPP). Residues Ser183 and Ser227 each carry the phosphoserine modification. Positions 217–241 (PTRNMAPSQQSPVRTASVNQRNRTY) are enriched in polar residues. Over residues 242–272 (SSSGSSGGSHPSSRSSSRENSGSGSVGVPIA) the composition is skewed to low complexity. Positions 273 to 282 (VPTPSPPSVF) are enriched in pro residues. Low complexity predominate over residues 283 to 325 (PAPAGSAGTPPLPATSASAPAPLVPATVPSSTAPNAAAGGAPN). The residue at position 361 (Thr361) is a Phosphothreonine. Ser368 is subject to Phosphoserine. The span at 376-399 (SITSQTSLQNQMNGGPFYSQNPVS) shows a compositional bias: polar residues. Positions 400-409 (DTPPPPPPVE) are enriched in pro residues. The SH3 domain maps to 451 to 510 (SYLEKVVAIYDYTKDKEDELSFQEGAIIYVIKKNDDGWYEGVMNGVTGLFPGNYVESIMH).

The protein belongs to the ABI family. Component of the WAVE complex composed of ABI2, CYFIP1 or CYFIP2, BRK1, NCKAP1 and WASF1/WAVE1. Within the complex, a heterodimer containing NCKAP1 and CYFIP1 interacts with a heterotrimer formed by WAVE1, ABI2 and BRK1. CYFIP2 binds to activated RAC1 which causes the complex to dissociate, releasing activated WASF1. Interacts (via SH3 domain) with ABL1 and ABL2. In terms of assembly, (Microbial infection) Interacts with human cytomegalovirus UL135. Phosphorylated by ABL1. In terms of tissue distribution, widely expressed. Abundant in testes, ovary, thymus, and colon, with lower but detectable levels in prostate, peripheral blood leukocytes, and spleen.

It is found in the cytoplasm. The protein localises to the nucleus. The protein resides in the cell projection. It localises to the lamellipodium. Its subcellular location is the filopodium. It is found in the cytoskeleton. The protein localises to the cell junction. The protein resides in the adherens junction. Functionally, regulator of actin cytoskeleton dynamics underlying cell motility and adhesion. Functions as a component of the WAVE complex, which activates actin nucleating machinery Arp2/3 to drive lamellipodia formation. Acts as a regulator and substrate of nonreceptor tyrosine kinases ABL1 and ABL2 involved in processes linked to cell growth and differentiation. Positively regulates ABL1-mediated phosphorylation of ENAH, which is required for proper polymerization of nucleated actin filaments at the leading edge. Contributes to the regulation of actin assembly at the tips of neuron projections. In particular, controls dendritic spine morphogenesis and may promote dendritic spine specification toward large mushroom-type spines known as repositories of memory in the brain. In hippocampal neurons, may mediate actin-dependent BDNF-NTRK2 early endocytic trafficking that triggers dendrite outgrowth. Participates in ocular lens morphogenesis, likely by regulating lamellipodia-driven adherens junction formation at the epithelial cell-secondary lens fiber interface. Also required for nascent adherens junction assembly in epithelial cells. This is Abl interactor 2 from Homo sapiens (Human).